Consider the following 454-residue polypeptide: tRNA modification GTPase MnmE (454 aa).

Residues R23, E80, and K120 each coordinate (6S)-5-formyl-5,6,7,8-tetrahydrofolate. In terms of domain architecture, TrmE-type G spans 216–377 (GMRVVIAGRP…VREHLKACIG (162 aa)). N226 is a binding site for K(+). Residues 226-231 (NAGKSS), 245-251 (TEIAGTT), 270-273 (DTAG), and 335-338 (NKAD) contribute to the GTP site. S230 lines the Mg(2+) pocket. The K(+) site is built by T245, I247, and T250. T251 contributes to the Mg(2+) binding site. Residue K454 participates in (6S)-5-formyl-5,6,7,8-tetrahydrofolate binding.

This sequence belongs to the TRAFAC class TrmE-Era-EngA-EngB-Septin-like GTPase superfamily. TrmE GTPase family. As to quaternary structure, homodimer. Heterotetramer of two MnmE and two MnmG subunits. Requires K(+) as cofactor.

It localises to the cytoplasm. Exhibits a very high intrinsic GTPase hydrolysis rate. Involved in the addition of a carboxymethylaminomethyl (cmnm) group at the wobble position (U34) of certain tRNAs, forming tRNA-cmnm(5)s(2)U34. The protein is tRNA modification GTPase MnmE of Pseudoalteromonas translucida (strain TAC 125).